The primary structure comprises 451 residues: UPF0210 protein lin0538 (451 aa).

Belongs to the UPF0210 family. Homodimer.

This is UPF0210 protein lin0538 from Listeria innocua serovar 6a (strain ATCC BAA-680 / CLIP 11262).